We begin with the raw amino-acid sequence, 429 residues long: Histidine--tRNA ligase (429 aa).

The protein belongs to the class-II aminoacyl-tRNA synthetase family. In terms of assembly, homodimer.

It localises to the cytoplasm. The catalysed reaction is tRNA(His) + L-histidine + ATP = L-histidyl-tRNA(His) + AMP + diphosphate + H(+). This Dechloromonas aromatica (strain RCB) protein is Histidine--tRNA ligase.